Here is a 564-residue protein sequence, read N- to C-terminus: Glutamyl-tRNA(Gln) amidotransferase subunit B, mitochondrial (564 aa).

The transit peptide at Met-1–Ala-88 directs the protein to the mitochondrion. Positions Pro-26–His-63 are disordered.

The protein belongs to the GatB/GatE family. GatB subfamily. As to quaternary structure, subunit of the heterotrimeric GatCAB amidotransferase (AdT) complex, composed of A, B and C subunits.

The protein localises to the mitochondrion. It carries out the reaction L-glutamyl-tRNA(Gln) + L-glutamine + ATP + H2O = L-glutaminyl-tRNA(Gln) + L-glutamate + ADP + phosphate + H(+). Functionally, allows the formation of correctly charged Gln-tRNA(Gln) through the transamidation of misacylated Glu-tRNA(Gln) in the mitochondria. The reaction takes place in the presence of glutamine and ATP through an activated gamma-phospho-Glu-tRNA(Gln). This Ajellomyces capsulatus (strain G186AR / H82 / ATCC MYA-2454 / RMSCC 2432) (Darling's disease fungus) protein is Glutamyl-tRNA(Gln) amidotransferase subunit B, mitochondrial.